Reading from the N-terminus, the 84-residue chain is Toxin NvePTx1 (84 aa).

A signal peptide spans 1 to 21 (MFSARLVLVFAVVLCIQLCNA). Positions 22–34 (SWLDERAMTQEKR) are excised as a propeptide.

The protein belongs to the sea anemone type 5 potassium channel toxin family. In terms of processing, contains 4 disulfide bonds. In unfertilized eggs and early post-fertilization stages, is expressed uniformly. In gastrulae, the expression becomes spatially-localized and seems to be absent from the oral and aboral poles. In planulae, the expression is clearly observed in the ectoderm in packed gland cells absent from the two body poles, and upon metamorphosis, the expression diminishes. There is two types of gland cells, one large and elongated and another small and round. This toxin is maternally deposited at both protein and RNA levels.

It is found in the secreted. The protein localises to the nematocyst. Its function is as follows. Neurotoxin that is probably only defensive. Acts as a voltage-gated potassium channel (Kv) inhibitor. In vivo, induces a rapid increase in swimming speed on zebrafish larvae, as well as death which occurs between 2 and 18 hours later. This is Toxin NvePTx1 from Nematostella vectensis (Starlet sea anemone).